We begin with the raw amino-acid sequence, 1452 residues long: Pleiotropic drug resistance protein 1 (1452 aa).

The ABC transporter 1 domain occupies Leu152–Glu425. An ATP-binding site is contributed by Gly185–Thr192. The ABC transmembrane type-2 1 domain occupies Leu504–Phe716. A run of 7 helical transmembrane segments spans residues Phe521–Phe541, Gly554–Ser574, Ile609–Phe629, Leu640–Leu660, Ile664–Phe684, Trp694–Asn714, and Ile753–Leu773. The segment at Leu808–Ser830 is disordered. The span at Ser812–Arg821 shows a compositional bias: basic and acidic residues. One can recognise an ABC transporter 2 domain in the interval Ile855–Asp1107. Gly900–Thr907 is an ATP binding site. The ABC transmembrane type-2 2 domain occupies Thr1180–Phe1394. 7 helical membrane-spanning segments follow: residues Tyr1199–Trp1219, Tyr1239–Ile1259, Leu1287–Phe1307, Phe1314–Met1334, Ile1344–Val1364, Trp1375–Gly1395, and Phe1421–Ala1441.

The protein belongs to the ABC transporter superfamily. ABCG family. PDR (TC 3.A.1.205) subfamily. In terms of tissue distribution, expressed in root hypodermal passage cells. Expressed in stem tissues, particularly the vasculature and nodes adjacent to leaf axils.

It is found in the cell membrane. In terms of biological role, cellular strigolactone (SL) transporter required for the exudation of SL from the root to the soil. The presence of SL in the vicinity of the roots is required for development of symbiotic interactions with arbuscular mycorrhizal fungi (AMF). Transports SL in the above ground tissues and is required for the control of shoot branching. SL regulates plant shoot architecture by inhibiting the outgrowth of axillary buds. Involved in the regulation of shootward and outward directional strigolactone transport in roots. Due to its polar localization in root cells, mediates directional shootward strigolactone transport, as well as localized outward directional transport for exudation to the soil. The protein is Pleiotropic drug resistance protein 1 of Petunia axillaris (Large white petunia).